Here is a 218-residue protein sequence, read N- to C-terminus: Elongation factor Ts (218 aa).

Residues 82 to 85 (TDFV) are involved in Mg(2+) ion dislocation from EF-Tu.

Belongs to the EF-Ts family.

Its subcellular location is the cytoplasm. Functionally, associates with the EF-Tu.GDP complex and induces the exchange of GDP to GTP. It remains bound to the aminoacyl-tRNA.EF-Tu.GTP complex up to the GTP hydrolysis stage on the ribosome. The chain is Elongation factor Ts (tsf) from Synechocystis sp. (strain ATCC 27184 / PCC 6803 / Kazusa).